A 270-amino-acid polypeptide reads, in one-letter code: Ribonuclease HII (270 aa).

One can recognise an RNase H type-2 domain in the interval 28–222; that stretch reads RQVAGADEAG…VSGRQGAPPR (195 aa). Residues D34, E35, and D128 each contribute to the a divalent metal cation site.

Belongs to the RNase HII family. Mn(2+) is required as a cofactor. The cofactor is Mg(2+).

Its subcellular location is the cytoplasm. It catalyses the reaction Endonucleolytic cleavage to 5'-phosphomonoester.. In terms of biological role, endonuclease that specifically degrades the RNA of RNA-DNA hybrids. The polypeptide is Ribonuclease HII (Salinispora tropica (strain ATCC BAA-916 / DSM 44818 / JCM 13857 / NBRC 105044 / CNB-440)).